The following is a 107-amino-acid chain: Class I hydrophobin 3 (107 aa).

Residues 1–18 (MQFKVLAALVIGATLAAA) form the signal peptide. Intrachain disulfides connect C26-C86, C33-C80, C34-C67, and C87-C100. N-linked (GlcNAc...) asparagine glycosylation is found at N35 and N89.

This sequence belongs to the fungal hydrophobin family. Self-assembles to form functional amyloid fibrils called rodlets. Self-assembly into fibrillar rodlets occurs spontaneously at hydrophobic:hydrophilic interfaces and the rodlets further associate laterally to form amphipathic monolayers.

The protein resides in the secreted. It localises to the cell wall. In terms of biological role, aerial growth, conidiation, and dispersal of filamentous fungi in the environment rely upon a capability of their secreting small amphipathic proteins called hydrophobins (HPBs) with low sequence identity. Class I can self-assemble into an outermost layer of rodlet bundles on aerial cell surfaces, conferring cellular hydrophobicity that supports fungal growth, development and dispersal; whereas Class II form highly ordered films at water-air interfaces through intermolecular interactions but contribute nothing to the rodlet structure. Pnh3 is a class I hydrophobin that might be involved in the attachment of the hydrophilic wall of hyphae to the hydrophobic surface of wood under inorganic phosphate (Pi)-deficient conditions and enable the mycelium to degrade efficiently the components of wood and to acquire nutrients containing Pi. The polypeptide is Class I hydrophobin 3 (Pholiota nameko).